The primary structure comprises 406 residues: Arginine biosynthesis bifunctional protein ArgJ (406 aa).

The substrate site is built by threonine 152, lysine 179, threonine 190, glutamate 277, asparagine 401, and serine 406. Threonine 190 serves as the catalytic Nucleophile.

Belongs to the ArgJ family. Heterotetramer of two alpha and two beta chains.

The protein resides in the cytoplasm. The catalysed reaction is N(2)-acetyl-L-ornithine + L-glutamate = N-acetyl-L-glutamate + L-ornithine. The enzyme catalyses L-glutamate + acetyl-CoA = N-acetyl-L-glutamate + CoA + H(+). It functions in the pathway amino-acid biosynthesis; L-arginine biosynthesis; L-ornithine and N-acetyl-L-glutamate from L-glutamate and N(2)-acetyl-L-ornithine (cyclic): step 1/1. Its pathway is amino-acid biosynthesis; L-arginine biosynthesis; N(2)-acetyl-L-ornithine from L-glutamate: step 1/4. Catalyzes two activities which are involved in the cyclic version of arginine biosynthesis: the synthesis of N-acetylglutamate from glutamate and acetyl-CoA as the acetyl donor, and of ornithine by transacetylation between N(2)-acetylornithine and glutamate. In Neisseria gonorrhoeae (strain ATCC 700825 / FA 1090), this protein is Arginine biosynthesis bifunctional protein ArgJ.